We begin with the raw amino-acid sequence, 186 residues long: ADP-ribosylation factor-like protein 8A (186 aa).

The note=Mediates targeting to membranes intramembrane region spans 1–19 (MLALFNKLLDWFRALFWKE). Residues 29-35 (QYSGKTT), 71-75 (DIGGQ), and 130-133 (NKRD) contribute to the GTP site.

The protein belongs to the small GTPase superfamily. Arf family.

The protein localises to the late endosome membrane. It is found in the lysosome membrane. Its subcellular location is the cytoplasm. The protein resides in the cytoskeleton. It localises to the spindle. The protein localises to the cell projection. It is found in the axon. Its subcellular location is the synapse. Its function is as follows. Plays a role in lysosome motility. In neurons, mediates the anterograde axonal long-range transport of presynaptic lysosome-related vesicles required for presynaptic biogenesis and synaptic function. May play a role in chromosome segregation. The protein is ADP-ribosylation factor-like protein 8A (ARL8A) of Gallus gallus (Chicken).